Consider the following 1342-residue polypeptide: DNA-directed RNA polymerase subunit beta (1342 aa).

The protein belongs to the RNA polymerase beta chain family. As to quaternary structure, the RNAP catalytic core consists of 2 alpha, 1 beta, 1 beta' and 1 omega subunit. When a sigma factor is associated with the core the holoenzyme is formed, which can initiate transcription.

It carries out the reaction RNA(n) + a ribonucleoside 5'-triphosphate = RNA(n+1) + diphosphate. In terms of biological role, DNA-dependent RNA polymerase catalyzes the transcription of DNA into RNA using the four ribonucleoside triphosphates as substrates. The protein is DNA-directed RNA polymerase subunit beta of Edwardsiella ictaluri (strain 93-146).